A 48-amino-acid chain; its full sequence is DNA-directed RNA polymerase subunit Rpo12 (48 aa).

Positions 9, 26, and 29 each coordinate Zn(2+).

It belongs to the archaeal Rpo12/eukaryotic RPC10 RNA polymerase subunit family. As to quaternary structure, part of the RNA polymerase complex. It depends on Zn(2+) as a cofactor.

It localises to the cytoplasm. It catalyses the reaction RNA(n) + a ribonucleoside 5'-triphosphate = RNA(n+1) + diphosphate. Functionally, DNA-dependent RNA polymerase (RNAP) catalyzes the transcription of DNA into RNA using the four ribonucleoside triphosphates as substrates. This chain is DNA-directed RNA polymerase subunit Rpo12, found in Sulfurisphaera tokodaii (strain DSM 16993 / JCM 10545 / NBRC 100140 / 7) (Sulfolobus tokodaii).